Reading from the N-terminus, the 606-residue chain is Aspartate--tRNA(Asp/Asn) ligase (606 aa).

Residue Glu172 participates in L-aspartate binding. Positions 196–199 (QLFK) are aspartate. Residue Arg218 coordinates L-aspartate. Residues 218–220 (RDE) and Gln227 contribute to the ATP site. His448 contacts L-aspartate. Residue Glu482 coordinates ATP. Arg489 contacts L-aspartate. 534-537 (GWDR) lines the ATP pocket.

It belongs to the class-II aminoacyl-tRNA synthetase family. Type 1 subfamily. In terms of assembly, homodimer.

The protein resides in the cytoplasm. The enzyme catalyses tRNA(Asx) + L-aspartate + ATP = L-aspartyl-tRNA(Asx) + AMP + diphosphate. In terms of biological role, aspartyl-tRNA synthetase with relaxed tRNA specificity since it is able to aspartylate not only its cognate tRNA(Asp) but also tRNA(Asn). Reaction proceeds in two steps: L-aspartate is first activated by ATP to form Asp-AMP and then transferred to the acceptor end of tRNA(Asp/Asn). The chain is Aspartate--tRNA(Asp/Asn) ligase from Saccharopolyspora erythraea (strain ATCC 11635 / DSM 40517 / JCM 4748 / NBRC 13426 / NCIMB 8594 / NRRL 2338).